The following is a 341-amino-acid chain: tRNA N6-adenosine threonylcarbamoyltransferase (341 aa).

Fe cation contacts are provided by His-111 and His-115. Residues 134–138, Asp-167, Gly-180, and Asn-276 contribute to the substrate site; that span reads LVSGG. Asp-304 is a Fe cation binding site.

Belongs to the KAE1 / TsaD family. Fe(2+) is required as a cofactor.

It localises to the cytoplasm. It catalyses the reaction L-threonylcarbamoyladenylate + adenosine(37) in tRNA = N(6)-L-threonylcarbamoyladenosine(37) in tRNA + AMP + H(+). Functionally, required for the formation of a threonylcarbamoyl group on adenosine at position 37 (t(6)A37) in tRNAs that read codons beginning with adenine. Is involved in the transfer of the threonylcarbamoyl moiety of threonylcarbamoyl-AMP (TC-AMP) to the N6 group of A37, together with TsaE and TsaB. TsaD likely plays a direct catalytic role in this reaction. This is tRNA N6-adenosine threonylcarbamoyltransferase from Pseudomonas aeruginosa (strain LESB58).